Reading from the N-terminus, the 213-residue chain is Large ribosomal subunit protein uL3 (213 aa).

The protein belongs to the universal ribosomal protein uL3 family. As to quaternary structure, part of the 50S ribosomal subunit. Forms a cluster with proteins L14 and L19.

Functionally, one of the primary rRNA binding proteins, it binds directly near the 3'-end of the 23S rRNA, where it nucleates assembly of the 50S subunit. The sequence is that of Large ribosomal subunit protein uL3 from Bifidobacterium adolescentis (strain ATCC 15703 / DSM 20083 / NCTC 11814 / E194a).